Reading from the N-terminus, the 122-residue chain is Large ribosomal subunit protein uL14 (122 aa).

The protein belongs to the universal ribosomal protein uL14 family. Part of the 50S ribosomal subunit. Forms a cluster with proteins L3 and L19. In the 70S ribosome, L14 and L19 interact and together make contacts with the 16S rRNA in bridges B5 and B8.

Binds to 23S rRNA. Forms part of two intersubunit bridges in the 70S ribosome. This is Large ribosomal subunit protein uL14 from Corynebacterium diphtheriae (strain ATCC 700971 / NCTC 13129 / Biotype gravis).